We begin with the raw amino-acid sequence, 185 residues long: Bcl-2-modifying factor (185 aa).

The interval 1–28 (MEPPQCVEELEDDVFQSEDGEPGTQPGG) is disordered. The segment covering 8-21 (EELEDDVFQSEDGE) has biased composition (acidic residues). An interaction with DLC2 region spans residues 67 to 75 (DKATQTLSP). Positions 134–148 (IARKLQCIADQFHRL) match the BH3 motif.

This sequence belongs to the Bcl-2 family. As to quaternary structure, interacts with MCL1, BCL2, BCL2L1/BCL-Xl, BCL2A1 and BCL2L2/BCL-w. Interacts with the myosin V actin motor complex through its binding to DLC2. In terms of tissue distribution, widely expressed with an abundant expression in pancreas, liver kidney and hematopoietic tissues.

In terms of biological role, may play a role in apoptosis. The polypeptide is Bcl-2-modifying factor (Bmf) (Mus musculus (Mouse)).